A 264-amino-acid chain; its full sequence is Short chain dehydrogenase/reductase nsrJ (264 aa).

Residues I24, D70, N97, and R130 each coordinate NADP(+). Residues S146 and S147 each act as proton donor in the active site. The NADP(+) site is built by Y161, K165, and T196. Residue Y161 is the Proton acceptor of the active site. The Lowers pKa of active site Tyr role is filled by K165.

The protein belongs to the short-chain dehydrogenases/reductases (SDR) family.

Its pathway is secondary metabolite biosynthesis. In terms of biological role, short chain dehydrogenase/reductase; part of the gene cluster that mediates the biosynthesis of the tetrahydroxanthone dimer neosartorin, which exhibits antibacterial activity. The two different monomeric units appear to be synthesized by the same set of enzymes, among which the Baeyer-Villiger monooxygenase nsrF is the key enzyme for the divergence of the biosynthetic routes. The pathway begins with the synthesis of atrochrysone thioester by the polyketide synthase nsrB. The atrochrysone carboxyl ACP thioesterase nsrC then breaks the thioester bond and releases the atrochrysone carboxylic acid from AacuL. Atrochrysone carboxylic acid is decarboxylated by the decarboxylase nsrE, and oxidized by the anthrone oxygenase nsrD to yield emodin. Emodin is then reduced to emodin hydroquinone by the oxidoreductase nsrR. A-ring reduction by the short chain dehydrogenase nsrJ, dehydration by the scytalone dehydratase-like protein nsrI and probable spontaneous re-oxidation, results in overall deoxygenation to chrysophanol. The Baeyer-Villiger monooxygenase nsrF accepts chrysophanol as a substrate to insert one oxygen atom at two different positions to yield the precursors of both monomric units. NsrF is promiscuous/flexible in interacting with the 2 (non methylated and methylated) aromatic rings of chrysophanol, thus diverging the biosynthetic pathway at this point. After the hydrolysis of the lactones, methylesterification by the methyltransferase nsrG yields respectively moniliphenone and 2,2',6'-trihydroxy-4-methyl-6-methoxya-cyldiphenylmethanone. The next steps are the hydroxylation by the FAD-dependent monooxygenase nsrK, followed by isomerization by the monooxygenase nsrQ. The short chain dehydrogenase/reductase nsrO then catalyzes the C-5 ketoreduction to give the xanthone skeleton of blennolide C and 5-acetylblennolide A. The acetyltransferase nsrL has a strict substrate specificity and uses only blennolide A but not blennolide C to yield 5-acetylblennolide A as the single-acetylated product. In the final step of the biosynthesis, the heterodimerization of the 2 xanthones, blennolide C and 5-acetylblennolide A, is catalyzed by the cytochrome P450 monooxygenase nsrP. NsrP can utilize at least three different xanthones as its substrates to perform the dimerization reaction. The sequence is that of Short chain dehydrogenase/reductase nsrJ from Aspergillus novofumigatus (strain IBT 16806).